The sequence spans 185 residues: Transcription antitermination protein NusB (185 aa).

It belongs to the NusB family.

Involved in transcription antitermination. Required for transcription of ribosomal RNA (rRNA) genes. Binds specifically to the boxA antiterminator sequence of the ribosomal RNA (rrn) operons. The chain is Transcription antitermination protein NusB from Rhodospirillum rubrum (strain ATCC 11170 / ATH 1.1.1 / DSM 467 / LMG 4362 / NCIMB 8255 / S1).